A 100-amino-acid chain; its full sequence is NADH-quinone oxidoreductase subunit K (100 aa).

The next 3 helical transmembrane spans lie at 4–24 (FEYY…GVII), 28–48 (IIAM…AFVA), and 61–81 (FVFF…GLII).

The protein belongs to the complex I subunit 4L family. In terms of assembly, NDH-1 is composed of 14 different subunits. Subunits NuoA, H, J, K, L, M, N constitute the membrane sector of the complex.

Its subcellular location is the cell inner membrane. It carries out the reaction a quinone + NADH + 5 H(+)(in) = a quinol + NAD(+) + 4 H(+)(out). Its function is as follows. NDH-1 shuttles electrons from NADH, via FMN and iron-sulfur (Fe-S) centers, to quinones in the respiratory chain. The immediate electron acceptor for the enzyme in this species is believed to be ubiquinone. Couples the redox reaction to proton translocation (for every two electrons transferred, four hydrogen ions are translocated across the cytoplasmic membrane), and thus conserves the redox energy in a proton gradient. This Sulfurihydrogenibium sp. (strain YO3AOP1) protein is NADH-quinone oxidoreductase subunit K.